The sequence spans 360 residues: MASATDNKEKQKALDSVLKTIEKTFGKGSIVRLGDATRMKVETISSGALTLDLALGGGLPKGRVIEIYGPESSGKTTLALHAIAETQKSGGIAAFVDAEHALDPTYAAALGVDIENLLVSQPDTGEMALEVVDHLVRSVAVDIVVVDSVAALVPRAEIEGDMGDSHMGLQARLMSQALRKITGNIGKSGCTVVFLNQLRQKIGVVYGNPETTTGGNALKFYASVRLDIRRTQTLKKSSEEYGIHAKVKVAKNKVAPPFRVAEFDIIFGKGISNVGCIIDLAEETDVIKRKGAWYSYQGSNFAQGREKAIAYMESNIDFAKKIEKQVRDHLSQGALVSANSVARVDEIEEDEDEDEALEEE.

Position 69 to 76 (69 to 76 (GPESSGKT)) interacts with ATP.

It belongs to the RecA family.

It is found in the cytoplasm. Can catalyze the hydrolysis of ATP in the presence of single-stranded DNA, the ATP-dependent uptake of single-stranded DNA by duplex DNA, and the ATP-dependent hybridization of homologous single-stranded DNAs. It interacts with LexA causing its activation and leading to its autocatalytic cleavage. The protein is Protein RecA of Trichodesmium erythraeum (strain IMS101).